The sequence spans 131 residues: Small ribosomal subunit protein uS11 (131 aa).

The protein belongs to the universal ribosomal protein uS11 family. Part of the 30S ribosomal subunit. Interacts with proteins S7 and S18. Binds to IF-3.

Functionally, located on the platform of the 30S subunit, it bridges several disparate RNA helices of the 16S rRNA. Forms part of the Shine-Dalgarno cleft in the 70S ribosome. This chain is Small ribosomal subunit protein uS11, found in Helicobacter pylori (strain Shi470).